The sequence spans 337 residues: F420-dependent glucose-6-phosphate dehydrogenase 2 (337 aa).

Asp40 contributes to the coenzyme F420-(gamma-Glu)n binding site. The active-site Proton donor is the His41. Residues Thr77 and Thr108–Gly109 each bind coenzyme F420-(gamma-Glu)n. Glu110 functions as the Proton acceptor in the catalytic mechanism. Coenzyme F420-(gamma-Glu)n contacts are provided by residues Asn113, Gly178–Gly179, and Val181–Val182. 4 residues coordinate substrate: Thr196, Lys199, Lys260, and Arg284.

The protein belongs to the F420-dependent glucose-6-phosphate dehydrogenase family. As to quaternary structure, homodimer.

The enzyme catalyses oxidized coenzyme F420-(gamma-L-Glu)(n) + D-glucose 6-phosphate + H(+) = 6-phospho-D-glucono-1,5-lactone + reduced coenzyme F420-(gamma-L-Glu)(n). Functionally, catalyzes the coenzyme F420-dependent oxidation of glucose 6-phosphate (G6P) to 6-phosphogluconolactone. The protein is F420-dependent glucose-6-phosphate dehydrogenase 2 of Rhodococcus jostii (strain RHA1).